Reading from the N-terminus, the 154-residue chain is Ribonuclease P protein component (154 aa).

Belongs to the RnpA family. In terms of assembly, consists of a catalytic RNA component (M1 or rnpB) and a protein subunit.

It catalyses the reaction Endonucleolytic cleavage of RNA, removing 5'-extranucleotides from tRNA precursor.. Functionally, RNaseP catalyzes the removal of the 5'-leader sequence from pre-tRNA to produce the mature 5'-terminus. It can also cleave other RNA substrates such as 4.5S RNA. The protein component plays an auxiliary but essential role in vivo by binding to the 5'-leader sequence and broadening the substrate specificity of the ribozyme. The sequence is that of Ribonuclease P protein component from Chlorobaculum tepidum (strain ATCC 49652 / DSM 12025 / NBRC 103806 / TLS) (Chlorobium tepidum).